The following is a 261-amino-acid chain: Ribosomal RNA small subunit methyltransferase J (261 aa).

S-adenosyl-L-methionine contacts are provided by residues 109-110, 125-126, and Asp179; these read RD and ER.

Belongs to the methyltransferase superfamily. RsmJ family.

The protein localises to the cytoplasm. The enzyme catalyses guanosine(1516) in 16S rRNA + S-adenosyl-L-methionine = N(2)-methylguanosine(1516) in 16S rRNA + S-adenosyl-L-homocysteine + H(+). In terms of biological role, specifically methylates the guanosine in position 1516 of 16S rRNA. This chain is Ribosomal RNA small subunit methyltransferase J, found in Pseudomonas aeruginosa (strain UCBPP-PA14).